The following is a 585-amino-acid chain: MAEAGTGFLEQLKSCIVWSWTYLWTVWFFIVLFLVYILRVPLKINDNLSTVSMFLNTLTPKFYVALTGTSSLISGLILIFEWWYFRKYGTSFIEQVSVSHLRPLLGGVDNNSSNNSNSSNGDSDSNRQSVSECKVWRNPLNLFRGAEYNRYTWVTGREPLTYYDMNLSAQDHQTFFTCDSDHLRPADAIMQKAWRERNPQARISAAHEALEINEIRSRVEVPLIASSTIWEIKLLPKCATAYILLAEEEATTIAEAEKLFKQALKAGDGCYRRSQQLQHHGSQYEAQHRRDTNVLVYIKRRLAMCARRLGRTREAVKMMRDLMKEFPLLSMFNIHENLLEALLELQAYADVQAVLAKYDDISLPKSATICYTAALLKARAVSDKFSPEAASRRGLSTAEMNAVEAIHRAVEFNPHVPKYLLEMKSLILPPEHILKRGDSEAIAYAFFHLAHWKRVEGALNLLHCTWEGTFRMIPYPLEKGHLFYPYPICTETADRELLPSFHEVSVYPKKELPFFILFTAGLCSFTAMLALLTHQFPELMGVFAKAMIDIFCSAEFRDWNCKSIFMRVEDELEIPPASQSQHFQN.

A helical transmembrane segment spans residues 15-35; it reads CIVWSWTYLWTVWFFIVLFLV. Residue Asn-47 is glycosylated (N-linked (GlcNAc...) asparagine). The helical transmembrane segment at 62-82 threads the bilayer; the sequence is FYVALTGTSSLISGLILIFEW. Position 386 is a phosphoserine (Ser-386). A helical membrane pass occupies residues 512–532; sequence LPFFILFTAGLCSFTAMLALL.

This sequence belongs to the ST7 family.

It is found in the membrane. This Callithrix jacchus (White-tufted-ear marmoset) protein is Suppressor of tumorigenicity 7 protein (ST7).